Here is a 126-residue protein sequence, read N- to C-terminus: Protein ApaG (126 aa).

Positions 2 to 126 (NQLAASVSVD…FRLSIPGLLH (125 aa)) constitute an ApaG domain.

This chain is Protein ApaG, found in Shewanella pealeana (strain ATCC 700345 / ANG-SQ1).